The chain runs to 334 residues: Dihydroorotate dehydrogenase (quinone) (334 aa).

Residues 59 to 63 and Thr-83 contribute to the FMN site; that span reads AGLDK. A substrate-binding site is contributed by Lys-63. Position 108 to 112 (108 to 112) interacts with substrate; that stretch reads NRMGF. Residues Asn-136 and Asn-169 each coordinate FMN. Asn-169 is a substrate binding site. Ser-172 (nucleophile) is an active-site residue. Substrate is bound at residue Asn-174. Residues Lys-214 and Thr-242 each contribute to the FMN site. 243–244 is a binding site for substrate; that stretch reads NT. Residues Gly-265, Gly-294, and 315 to 316 each bind FMN; that span reads YS.

Belongs to the dihydroorotate dehydrogenase family. Type 2 subfamily. In terms of assembly, monomer. FMN is required as a cofactor.

It is found in the cell membrane. The catalysed reaction is (S)-dihydroorotate + a quinone = orotate + a quinol. Its pathway is pyrimidine metabolism; UMP biosynthesis via de novo pathway; orotate from (S)-dihydroorotate (quinone route): step 1/1. In terms of biological role, catalyzes the conversion of dihydroorotate to orotate with quinone as electron acceptor. This is Dihydroorotate dehydrogenase (quinone) from Acinetobacter baumannii (strain AB0057).